Here is a 677-residue protein sequence, read N- to C-terminus: Methionine--tRNA ligase (677 aa).

The 'HIGH' region motif lies at 15–25 (PYANGSIHLGH). Residues cysteine 146, cysteine 149, cysteine 159, and cysteine 162 each coordinate Zn(2+). Positions 333–337 (KMSKS) match the 'KMSKS' region motif. Residue lysine 336 coordinates ATP. One can recognise a tRNA-binding domain in the interval 575-677 (DFAKIDLRVA…DGAKPGQQVK (103 aa)).

It belongs to the class-I aminoacyl-tRNA synthetase family. MetG type 1 subfamily. In terms of assembly, homodimer. Zn(2+) serves as cofactor.

It is found in the cytoplasm. It carries out the reaction tRNA(Met) + L-methionine + ATP = L-methionyl-tRNA(Met) + AMP + diphosphate. In terms of biological role, is required not only for elongation of protein synthesis but also for the initiation of all mRNA translation through initiator tRNA(fMet) aminoacylation. The protein is Methionine--tRNA ligase of Salmonella paratyphi A (strain AKU_12601).